Here is a 187-residue protein sequence, read N- to C-terminus: Putative acyl-coenzyme A oxidase At3g06690 (187 aa).

Residues 1–21 are disordered; sequence MTKEPIYSPRMLHRDPDSPRP.

Belongs to the acyl-CoA oxidase family.

It carries out the reaction a 2,3-saturated acyl-CoA + O2 = a (2E)-enoyl-CoA + H2O2. This chain is Putative acyl-coenzyme A oxidase At3g06690, found in Arabidopsis thaliana (Mouse-ear cress).